A 72-amino-acid chain; its full sequence is Translation initiation factor IF-1 (72 aa).

The S1-like domain maps to 1–72 (MSKEDSIEVT…TKGRITFRHR (72 aa)).

This sequence belongs to the IF-1 family. Component of the 30S ribosomal translation pre-initiation complex which assembles on the 30S ribosome in the order IF-2 and IF-3, IF-1 and N-formylmethionyl-tRNA(fMet); mRNA recruitment can occur at any time during PIC assembly.

It is found in the cytoplasm. One of the essential components for the initiation of protein synthesis. Stabilizes the binding of IF-2 and IF-3 on the 30S subunit to which N-formylmethionyl-tRNA(fMet) subsequently binds. Helps modulate mRNA selection, yielding the 30S pre-initiation complex (PIC). Upon addition of the 50S ribosomal subunit IF-1, IF-2 and IF-3 are released leaving the mature 70S translation initiation complex. The chain is Translation initiation factor IF-1 from Solibacter usitatus (strain Ellin6076).